Consider the following 314-residue polypeptide: MLEIEKPKIECVARSDDATYGKFVVEPLERGYGVTLGNSLRRILLTSLFGAAVTSVKIEGVLHEFSTIPGVVEDTTDIILNLKQLAIKMHTEESRTIRVEFEGEGVVTAADILTDADVEILNPDQVIATVDKGRLFMEITVEKSRGYITATKHRKSEHAIGVIPIDANFSPVRKVNYRVEDTRVGQITNYDRLILEVWTNGSLTPEEAISWSAKIMNDYLKLFVALTENTENVEIMVETEERPQDKILEMTIEELDLSVRSYNCLKRAGINTVKDLTNKTEEDMIKVRNLGRKSLEEVDAKLAALGLSLRKSED.

The tract at residues Met1 to Thr227 is alpha N-terminal domain (alpha-NTD). An alpha C-terminal domain (alpha-CTD) region spans residues Gln244–Asp314.

The protein belongs to the RNA polymerase alpha chain family. As to quaternary structure, homodimer. The RNAP catalytic core consists of 2 alpha, 1 beta, 1 beta' and 1 omega subunit. When a sigma factor is associated with the core the holoenzyme is formed, which can initiate transcription.

It carries out the reaction RNA(n) + a ribonucleoside 5'-triphosphate = RNA(n+1) + diphosphate. Its function is as follows. DNA-dependent RNA polymerase catalyzes the transcription of DNA into RNA using the four ribonucleoside triphosphates as substrates. The protein is DNA-directed RNA polymerase subunit alpha of Heliobacterium modesticaldum (strain ATCC 51547 / Ice1).